The chain runs to 94 residues: Co-chaperonin GroES (94 aa).

The protein belongs to the GroES chaperonin family. In terms of assembly, heptamer of 7 subunits arranged in a ring. Interacts with the chaperonin GroEL.

Its subcellular location is the cytoplasm. Its function is as follows. Together with the chaperonin GroEL, plays an essential role in assisting protein folding. The GroEL-GroES system forms a nano-cage that allows encapsulation of the non-native substrate proteins and provides a physical environment optimized to promote and accelerate protein folding. GroES binds to the apical surface of the GroEL ring, thereby capping the opening of the GroEL channel. The polypeptide is Co-chaperonin GroES (Streptococcus agalactiae).